Here is a 144-residue protein sequence, read N- to C-terminus: L-fucose mutarotase (144 aa).

The active-site Proton donor is the H22. Residues D30, R109, and 131-133 (YGN) each bind substrate.

It belongs to the RbsD / FucU family. FucU mutarotase subfamily. As to quaternary structure, homodecamer.

Its subcellular location is the cytoplasm. It carries out the reaction alpha-L-fucose = beta-L-fucose. The protein operates within carbohydrate metabolism; L-fucose metabolism. Functionally, involved in the anomeric conversion of L-fucose. The protein is L-fucose mutarotase of Haemophilus influenzae (strain PittGG).